We begin with the raw amino-acid sequence, 142 residues long: Large ribosomal subunit protein uL29 (142 aa).

Belongs to the universal ribosomal protein uL29 family.

The polypeptide is Large ribosomal subunit protein uL29 (RPL35) (Theileria annulata).